Here is a 263-residue protein sequence, read N- to C-terminus: Small ribosomal subunit protein eS4, Y isoform 1 (263 aa).

In terms of domain architecture, S4 RNA-binding spans 42–104 (LPLIVFLRNR…TGEHFRLVYD (63 aa)).

It belongs to the eukaryotic ribosomal protein eS4 family.

The polypeptide is Small ribosomal subunit protein eS4, Y isoform 1 (RPS4Y1) (Homo sapiens (Human)).